We begin with the raw amino-acid sequence, 477 residues long: Bifunctional protein HldE (477 aa).

The tract at residues 1-318 (MKVTLPEFER…ENAVRGRADT (318 aa)) is ribokinase. Position 179 is an N6-acetyllysine (lysine 179). Position 195–198 (195–198 (NLSE)) interacts with ATP. Residue aspartate 264 is part of the active site. The interval 344-477 (MTNGVFDILH…IKKIQQDKKG (134 aa)) is cytidylyltransferase.

It in the N-terminal section; belongs to the carbohydrate kinase PfkB family. The protein in the C-terminal section; belongs to the cytidylyltransferase family. Homodimer.

The enzyme catalyses D-glycero-beta-D-manno-heptose 7-phosphate + ATP = D-glycero-beta-D-manno-heptose 1,7-bisphosphate + ADP + H(+). It catalyses the reaction D-glycero-beta-D-manno-heptose 1-phosphate + ATP + H(+) = ADP-D-glycero-beta-D-manno-heptose + diphosphate. It participates in nucleotide-sugar biosynthesis; ADP-L-glycero-beta-D-manno-heptose biosynthesis; ADP-L-glycero-beta-D-manno-heptose from D-glycero-beta-D-manno-heptose 7-phosphate: step 1/4. Its pathway is nucleotide-sugar biosynthesis; ADP-L-glycero-beta-D-manno-heptose biosynthesis; ADP-L-glycero-beta-D-manno-heptose from D-glycero-beta-D-manno-heptose 7-phosphate: step 3/4. Functionally, catalyzes the phosphorylation of D-glycero-D-manno-heptose 7-phosphate at the C-1 position to selectively form D-glycero-beta-D-manno-heptose-1,7-bisphosphate. Its function is as follows. Catalyzes the ADP transfer from ATP to D-glycero-beta-D-manno-heptose 1-phosphate, yielding ADP-D-glycero-beta-D-manno-heptose. This Escherichia coli O17:K52:H18 (strain UMN026 / ExPEC) protein is Bifunctional protein HldE.